A 246-amino-acid polypeptide reads, in one-letter code: MPALSGPQYLGEGLKLIMRPGLRLFVLIPLTLNLLVFALLIGFAMQQFSHWVDLLMPSLPDWLSFLQYIVWPLFVLLVLVIVFFTFTMVANIISAPFNGFLSEKVEVVVRGRDDFPPFSWAELLAMIPRTMGREMRKLAYFLPRALVLLVLSFVPGVNLIATPLWILFGIWMMAVQYIDYPADNHKLGWNEMLAWLRSKRWACMGFGGVTYLALLIPLVNLVMMPAAVAGATLFWVREEGEKALVK.

Helical transmembrane passes span 24-44 (LFVL…IGFA), 69-89 (IVWP…FTMV), 148-168 (LLVL…WILF), and 214-234 (LLIP…ATLF).

Belongs to the CysZ family.

The protein resides in the cell inner membrane. Its function is as follows. High affinity, high specificity proton-dependent sulfate transporter, which mediates sulfate uptake. Provides the sulfur source for the cysteine synthesis pathway. The sequence is that of Sulfate transporter CysZ from Pseudomonas aeruginosa (strain LESB58).